An 872-amino-acid chain; its full sequence is Adhesive plaque matrix protein (872 aa).

The N-terminal stretch at 1-20 (MEGIKLNLCLLCIFSCDIFA) is a signal peptide. The nonrepetitive linker stretch occupies residues 21–41 (LSNGNIHNVYGSAYSGASAGA). A run of 69 repeats spans residues 124–133 (YKAKTSYPPS), 134–143 (YKHKITYPPT), 144–153 (YKPKITYPPT), 154–163 (YKQKPSYPPS), 174–183 (YKPKITYPPT), 184–192 (YKRKPSYTP), 193–202 (YKPKATYPPT), 203–212 (YKPKITYPPT), 213–221 (YKRKPSYTP), 222–231 (YKPKTTYPPT), 232–241 (YKPKISYPSI), 242–251 (YKPKASYVSS), 252–261 (YKSKKTYPPT), 262–271 (YKPKISYPPT), 272–281 (YKPKPSYPPT), 282–291 (YKPKVTYPPT), 292–301 (YKPKPSYPPT), 302–311 (YKPKITYPPT), 312–321 (YKPKPSYPTP), 322–331 (YKQKPSYPPI), 332–341 (YKSKSSYPTS), 342–351 (YKSKKTYPPT), 352–361 (YKPKITYPPT), 362–371 (YKPKPSYPPS), 372–381 (YKPKKTYSPT), 382–391 (YKPKITYPPT), 402–411 (YKPKTTYPPT), 412–421 (YKPKISYPPT), 422–431 (YKPKASYVSS), 432–441 (YKSKKTYPPT), 442–451 (YKPKISYPPT), 452–461 (YKPKPSYPPT), 462–471 (YKPKITYPPT), 472–481 (YKPKPSYPPT), 482–491 (YKPKITYPPT), 502–511 (YKQKPSYPPI), 512–521 (YKSKSSYPTS), 522–531 (YKSKKTYPPT), 532–541 (YKPKITYPPT), 542–551 (YKPKPSYPPS), 552–561 (YKPKTTYPPT), 562–571 (YKPKIRYPPT), 572–581 (YKPKASYPPT), 582–591 (YKPKITYPPT), 602–611 (YKQKPSYPPI), 612–621 (YKSKSSYPTA), 622–631 (YKSKKTYPPT), 632–641 (YKPKITYPPT), 642–651 (YKPKPSYPPS), 652–661 (YRPKITYPPT), 662–671 (YKPKKSYPQA), 672–681 (YKSKGSYPPS), 682–691 (YQPKKTYPPS), 702–711 (YKPKISYPPT), 712–721 (YKTKPSYPAS), 722–731 (YKRKTSYPPT), 732–741 (YKPKISYPST), 742–751 (YKAKPSYPPT), 752–761 (YKPKPSYASS), 762–771 (YKPKIRYPPT), 772–781 (YKPKPSYASS), 782–791 (YKPKIRYPPT), 792–801 (YKPKPSYASS), 812–821 (YKPKPSYASS), 822–831 (YKPKITYPPT), 832–841 (YKPKISYPPT), 842–851 (YKPKITYPPT), 852–861 (YKPKISYPPA), and 862–871 (YKPKISYPSQ). The tract at residues 124–871 (YKAKTSYPPS…YKPKISYPSQ (748 aa)) is 69 X 10 AA tandem repeats of Y-[KRQ]-[PSTAHQR]-K-[AIPTSKGV]-[STR]-Y-[PTSVA]-[PSTQA]-[STYIPAQ]. The interval 184-192 (YKRKPSYTP) is nonapeptide 1. The segment at 213-221 (YKRKPSYTP) is nonapeptide 2. Pro residues-rich tracts occupy residues 273–282 (KPKPSYPPTY) and 291–302 (TYKPKPSYPPTY). Residues 273 to 781 (KPKPSYPPTY…YKPKPSYASS (509 aa)) are disordered. Positions 320-360 (TPYKQKPSYPPIYKSKSSYPTSYKSKKTYPPTYKPKITYPP) are enriched in low complexity. Positions 361 to 372 (TYKPKPSYPPSY) are enriched in pro residues. The span at 377-390 (TYSPTYKPKITYPP) shows a compositional bias: low complexity. Positions 391-402 (TYKPKPSYPPSY) are enriched in pro residues. Residues 403–450 (KPKTTYPPTYKPKISYPPTYKPKASYVSSYKSKKTYPPTYKPKISYPP) show a composition bias toward low complexity. Composition is skewed to pro residues over residues 451 to 462 (TYKPKPSYPPTY) and 471 to 482 (TYKPKPSYPPTY). Positions 501–540 (PYKQKPSYPPIYKSKSSYPTSYKSKKTYPPTYKPKITYPP) are enriched in low complexity. The span at 541–552 (TYKPKPSYPPSY) shows a compositional bias: pro residues. Composition is skewed to low complexity over residues 568–590 (YPPT…TYPP) and 600–640 (TPYK…TYPP). Residues 641 to 652 (TYKPKPSYPPSY) are compositionally biased toward pro residues. Low complexity-rich tracts occupy residues 677-690 (SYPP…TYPP) and 698-719 (YPPT…PSYP). The span at 754 to 763 (PKPSYASSYK) shows a compositional bias: low complexity.

Hydroxylated on proline (mono- or dihydroxylation) and tyrosine residues (to L-DOPA = 3',4'-dihydroxyphenylalanine) of the tandem repeats. In terms of tissue distribution, produced by the byssal gland.

The protein localises to the secreted. Its function is as follows. Provides adhesiveness to the mussel's foot. Mussels produce one of the strongest water insoluble glues. The mussel's adhesive is a bundle of threads, called a byssus, formed by a fibrous collagenous core coated with adhesive proteins. The polypeptide is Adhesive plaque matrix protein (FP1) (Mytilus coruscus (Sea mussel)).